Reading from the N-terminus, the 137-residue chain is Endoribonuclease YbeY (137 aa).

Residues H103, H107, and H113 each coordinate Zn(2+).

It belongs to the endoribonuclease YbeY family. Zn(2+) serves as cofactor.

Its subcellular location is the cytoplasm. Single strand-specific metallo-endoribonuclease involved in late-stage 70S ribosome quality control and in maturation of the 3' terminus of the 16S rRNA. The sequence is that of Endoribonuclease YbeY from Acholeplasma laidlawii (strain PG-8A).